The chain runs to 353 residues: Protein RecA (353 aa).

Residue 67-74 (GPESSGKT) participates in ATP binding.

This sequence belongs to the RecA family.

It is found in the cytoplasm. Functionally, can catalyze the hydrolysis of ATP in the presence of single-stranded DNA, the ATP-dependent uptake of single-stranded DNA by duplex DNA, and the ATP-dependent hybridization of homologous single-stranded DNAs. It interacts with LexA causing its activation and leading to its autocatalytic cleavage. In Shewanella loihica (strain ATCC BAA-1088 / PV-4), this protein is Protein RecA.